The chain runs to 594 residues: Golgi-associated RAB2 interactor protein 4 (594 aa).

The interval 390–525 is disordered; it reads AAGLPVSTRQ…SSGSSKRLGR (136 aa). Residues 396–406 show a composition bias toward polar residues; it reads STRQSKSSLSG. 3 stretches are compositionally biased toward basic and acidic residues: residues 408–433, 442–455, and 468–477; these read HGRERTQASAEACKEGRERREKDKAL, TGESRHKTRGDKIA, and ASRDGKKEKG. The span at 510–521 shows a compositional bias: low complexity; that stretch reads RSSSTTSSGSSK.

Belongs to the GARIN family. In terms of assembly, interacts (via N-terminus) with RAB2B (in GTP-bound form).

The protein localises to the golgi apparatus. In terms of biological role, RAB2B effector protein required for the compacted Golgi morphology, probably through interaction with small GTPase RAB2B. The protein is Golgi-associated RAB2 interactor protein 4 (GARIN4) of Macaca fascicularis (Crab-eating macaque).